Reading from the N-terminus, the 156-residue chain is Small ribosomal subunit protein uS7 (156 aa).

It belongs to the universal ribosomal protein uS7 family. Part of the 30S ribosomal subunit. Contacts proteins S9 and S11.

One of the primary rRNA binding proteins, it binds directly to 16S rRNA where it nucleates assembly of the head domain of the 30S subunit. Is located at the subunit interface close to the decoding center, probably blocks exit of the E-site tRNA. This is Small ribosomal subunit protein uS7 from Bacillus licheniformis (strain ATCC 14580 / DSM 13 / JCM 2505 / CCUG 7422 / NBRC 12200 / NCIMB 9375 / NCTC 10341 / NRRL NRS-1264 / Gibson 46).